The following is a 132-amino-acid chain: Small ribosomal subunit protein uS8 (132 aa).

The protein belongs to the universal ribosomal protein uS8 family. As to quaternary structure, part of the 30S ribosomal subunit. Contacts proteins S5 and S12.

One of the primary rRNA binding proteins, it binds directly to 16S rRNA central domain where it helps coordinate assembly of the platform of the 30S subunit. In Listeria innocua serovar 6a (strain ATCC BAA-680 / CLIP 11262), this protein is Small ribosomal subunit protein uS8.